Consider the following 621-residue polypeptide: Hemolysin ahh1 (621 aa).

Residues 1–30 (MKNKKPRKFITQAPTLSLLALALLAGSVQA) form the signal peptide. Residues 491-610 (RPVNLQLGGF…QNVSVRTLTS (120 aa)) form the Ricin B-type lectin domain.

Belongs to the HlyA hemolysin family.

Bacterial hemolysins are exotoxins that attack blood cell membranes and cause cell rupture by mechanisms not clearly defined. The chain is Hemolysin ahh1 (ahh1) from Aeromonas hydrophila subsp. hydrophila (strain ATCC 7966 / DSM 30187 / BCRC 13018 / CCUG 14551 / JCM 1027 / KCTC 2358 / NCIMB 9240 / NCTC 8049).